We begin with the raw amino-acid sequence, 1088 residues long: RNA-directed RNA polymerase (1088 aa).

A RdRp catalytic domain is found at 501–687 (LSYGDVTRFL…AKRYIAGGKI (187 aa)).

This sequence belongs to the reoviridae RNA-directed RNA polymerase family. As to quaternary structure, interacts with VP3 (Potential). Interacts with VP2; this interaction activates VP1. Interacts with NSP5; this interaction is probably necessary for the formation of functional virus factories. Interacts with NSP2; this interaction is weak. Mg(2+) serves as cofactor.

The protein localises to the virion. It catalyses the reaction RNA(n) + a ribonucleoside 5'-triphosphate = RNA(n+1) + diphosphate. RNA-directed RNA polymerase that is involved in both transcription and genome replication. Together with VP3 capping enzyme, forms an enzyme complex positioned near the channels situated at each of the five-fold vertices of the core. Following infection, the outermost layer of the virus is lost, leaving a double-layered particle (DLP) made up of the core and VP6 shell. VP1 then catalyzes the transcription of fully conservative plus-strand genomic RNAs that are extruded through the DLP's channels into the cytoplasm where they function as mRNAs for translation of viral proteins. One copy of each of the viral (+)RNAs is also recruited during core assembly, together with newly synthesized polymerase complexes and VP2. The polymerase of these novo-formed particles catalyzes the synthesis of complementary minus-strands leading to dsRNA formation. To do so, the polymerase specifically recognizes and binds 4 bases 5'-UGUG-3' in the conserved 3'-sequence of plus-strand RNA templates. VP2 presumably activates the autoinhibited VP1-RNA complex to coordinate packaging and genome replication. Once dsRNA synthesis is complete, the polymerase switches to the transcriptional mode, thus providing secondary transcription. The protein is RNA-directed RNA polymerase of Rotavirus A (strain RVA/Human/United States/Wa/1974/G1P1A[8]) (RV-A).